The chain runs to 173 residues: Crossover junction endodeoxyribonuclease RuvC (173 aa).

Catalysis depends on residues D8, E67, and D139. Residues D8, E67, and D139 each coordinate Mg(2+).

It belongs to the RuvC family. Homodimer which binds Holliday junction (HJ) DNA. The HJ becomes 2-fold symmetrical on binding to RuvC with unstacked arms; it has a different conformation from HJ DNA in complex with RuvA. In the full resolvosome a probable DNA-RuvA(4)-RuvB(12)-RuvC(2) complex forms which resolves the HJ. It depends on Mg(2+) as a cofactor.

Its subcellular location is the cytoplasm. It carries out the reaction Endonucleolytic cleavage at a junction such as a reciprocal single-stranded crossover between two homologous DNA duplexes (Holliday junction).. In terms of biological role, the RuvA-RuvB-RuvC complex processes Holliday junction (HJ) DNA during genetic recombination and DNA repair. Endonuclease that resolves HJ intermediates. Cleaves cruciform DNA by making single-stranded nicks across the HJ at symmetrical positions within the homologous arms, yielding a 5'-phosphate and a 3'-hydroxyl group; requires a central core of homology in the junction. The consensus cleavage sequence is 5'-(A/T)TT(C/G)-3'. Cleavage occurs on the 3'-side of the TT dinucleotide at the point of strand exchange. HJ branch migration catalyzed by RuvA-RuvB allows RuvC to scan DNA until it finds its consensus sequence, where it cleaves and resolves the cruciform DNA. The polypeptide is Crossover junction endodeoxyribonuclease RuvC (Erwinia tasmaniensis (strain DSM 17950 / CFBP 7177 / CIP 109463 / NCPPB 4357 / Et1/99)).